Reading from the N-terminus, the 375-residue chain is Trichodiene synthase (375 aa).

Belongs to the trichodiene synthase family.

It catalyses the reaction (2E,6E)-farnesyl diphosphate = trichodiene + diphosphate. Its pathway is sesquiterpene biosynthesis; trichothecene biosynthesis. TS is a member of the terpene cyclase group of enzymes. It catalyzes the isomerization and cyclization of farnesyl pyro-phosphate to form trichodiene, the first cyclic intermediate in the biosynthetic pathway for trichothecenes. It serves to branch trichothecene biosynthesis from the isoprenoid pathway. This chain is Trichodiene synthase (TRI5), found in Gibberella zeae (strain ATCC MYA-4620 / CBS 123657 / FGSC 9075 / NRRL 31084 / PH-1) (Wheat head blight fungus).